The chain runs to 746 residues: Exostosin-1 (746 aa).

The Cytoplasmic portion of the chain corresponds to 1 to 7 (MQAKKRY). A helical; Signal-anchor for type II membrane protein membrane pass occupies residues 8–28 (FILLSAGSCLALLFYFGGLQF). The Lumenal segment spans residues 29-746 (RASRSHSRRE…RKKYRDIERL (718 aa)). Asn-89 carries an N-linked (GlcNAc...) asparagine glycan. 2 cysteine pairs are disulfide-bonded: Cys-98/Cys-103 and Cys-109/Cys-152. Residues Leu-166 and Tyr-203 each coordinate a protein. Residues Lys-267, Lys-269, Tyr-271, and Arg-280 each contribute to the UDP site. Cys-298 and Cys-312 form a disulfide bridge. His-300 serves as a coordination point for a protein. Residues Tyr-319 and Tyr-324 each coordinate UDP. N-linked (GlcNAc...) asparagine glycosylation occurs at Asn-330. 2 disulfide bridges follow: Cys-334–Cys-355 and Cys-652–Cys-704. UDP is bound by residues Arg-346 and Glu-349.

This sequence belongs to the glycosyltransferase 47 family. As to quaternary structure, part of the heparan sulfate polymerase, a dimeric complex composed of EXT1 and EXT2. Could also form homooligomeric complexes. Interacts with NDST1. N-glycosylated.

It localises to the golgi apparatus membrane. It is found in the golgi apparatus. The protein resides in the cis-Golgi network membrane. Its subcellular location is the endoplasmic reticulum membrane. It catalyses the reaction 3-O-{alpha-D-GlcNAc-[(1-&gt;4)-beta-D-GlcA-(1-&gt;4)-alpha-D-GlcNAc](n)-(1-&gt;4)-beta-D-GlcA-(1-&gt;3)-beta-D-Gal-(1-&gt;3)-beta-D-Gal-(1-&gt;4)-beta-D-Xyl}-L-seryl-[protein] + UDP-alpha-D-glucuronate = 3-O-{[(1-&gt;4)-beta-D-GlcA-(1-&gt;4)-alpha-D-GlcNAc](n+1)-(1-&gt;4)-beta-D-GlcA-(1-&gt;3)-beta-D-Gal-(1-&gt;3)-beta-D-Gal-(1-&gt;4)-beta-D-Xyl}-L-seryl-[protein] + UDP + H(+). The protein operates within protein modification; protein glycosylation. Functionally, glycosyltransferase forming with EXT2 the heterodimeric heparan sulfate polymerase which catalyzes the elongation of the heparan sulfate glycan backbone. Glycan backbone extension consists in the alternating transfer of (1-&gt;4)-beta-D-GlcA and (1-&gt;4)-alpha-D-GlcNAc residues from their respective UDP-sugar donors. Both EXT1 and EXT2 are required for the full activity of the polymerase since EXT1 bears the N-acetylglucosaminyl-proteoglycan 4-beta-glucuronosyltransferase activity within the complex while EXT2 carries the glucuronosyl-N-acetylglucosaminyl-proteoglycan 4-alpha-N-acetylglucosaminyltransferase activity. Heparan sulfate proteoglycans are ubiquitous components of the extracellular matrix and play an important role in tissue homeostasis and signaling. This Pongo abelii (Sumatran orangutan) protein is Exostosin-1 (EXT1).